The sequence spans 370 residues: Putative FBD-associated F-box protein At1g50980 (370 aa).

The 47-residue stretch at 31–77 (IRTISEFPDKVLLKILSLLPSKDVVATGVLSKRWRSLWKDVKTFRTS) folds into the F-box domain. The region spanning 292-343 (LMGNQPDLIPKSLSSHLEILEWRQYNDTAQEREAAKYILANASGLRKATFYT) is the FBD domain.

This Arabidopsis thaliana (Mouse-ear cress) protein is Putative FBD-associated F-box protein At1g50980.